The chain runs to 832 residues: Serine/threonine-protein kinase Doa (832 aa).

4 disordered regions span residues 1 to 86 (MVAA…SKYI), 135 to 158 (LLQH…QQYP), 179 to 215 (SDPF…KQAP), and 258 to 419 (SKIG…QLQQ). The span at 8–18 (VPTSSSSSAAT) shows a compositional bias: polar residues. The span at 20–32 (RQKDVDNKLEKCL) shows a compositional bias: basic and acidic residues. Composition is skewed to low complexity over residues 40–53 (TSSN…SNNN), 137–158 (QHQQ…QQYP), and 183–203 (MQQQ…KLQQ). Positions 271–282 (HSASFSSAQRPT) are enriched in polar residues. Low complexity-rich tracts occupy residues 285 to 310 (QFHQ…QHQH), 347 to 365 (QMQP…TQFQ), and 396 to 419 (SSSS…QLQQ). Residues 479–799 (YKIMATLGEG…LGEALHHPFF (321 aa)) form the Protein kinase domain. ATP is bound by residues 485–493 (LGEGTFGRV) and lysine 508. Residue aspartate 605 is the Proton acceptor of the active site. The disordered stretch occupies residues 809-832 (GEVSNKQPLSSGSSSRERSHSLSR). Residues 823-832 (SRERSHSLSR) are compositionally biased toward basic and acidic residues.

Belongs to the protein kinase superfamily. CMGC Ser/Thr protein kinase family. Lammer subfamily. As to quaternary structure, interacts (via N-terminus) with x16 (via Arg/Ser-rich region). Interacts with eEF1gamma (via C-terminus); the interaction is probably direct, is transient and leads to phosphorylation of eEF1gamma by Doa. Mg(2+) is required as a cofactor. Autophosphorylated on serine, threonine and tyrosine residues. As to expression, ubiquitous expression in embryos. Stage 17 embryos show elevated expression in CNS and brain. Ubiquitous expression in larval imaginal disks. Increased expression posterior to the eye-antennal disk morphogenetic furrow.

It is found in the cytoplasm. Its subcellular location is the cytosol. The protein resides in the nucleus. It catalyses the reaction L-seryl-[protein] + ATP = O-phospho-L-seryl-[protein] + ADP + H(+). The enzyme catalyses L-threonyl-[protein] + ATP = O-phospho-L-threonyl-[protein] + ADP + H(+). The catalysed reaction is L-tyrosyl-[protein] + ATP = O-phospho-L-tyrosyl-[protein] + ADP + H(+). Dual specificity kinase involved in the negative regulation of microtubule-based transport through phsophorylation of the microtuble-binding protein eEF1gamma. May function in the control of alternative splicing by phosphorylating serine/arginine-rich splicing factors, the SR proteins, including x16. Negative regulator of the copia retrotransposon element of the white (w) gene. In the eye, it is required for normal pigmentation, photoreceptor cell development and for organization of interommatidial bristles. Also essential for embryonic segmentation and differentiation of the nervous system. Functionally, may be the specific isoform involved in regulation of microtubule-based transport through phosphorylation of the microtubule binding protein eEF1gamma. This Drosophila melanogaster (Fruit fly) protein is Serine/threonine-protein kinase Doa.